Reading from the N-terminus, the 312-residue chain is Methionyl-tRNA formyltransferase (312 aa).

109 to 112 contacts (6S)-5,6,7,8-tetrahydrofolate; it reads SLLP.

It belongs to the Fmt family.

The catalysed reaction is L-methionyl-tRNA(fMet) + (6R)-10-formyltetrahydrofolate = N-formyl-L-methionyl-tRNA(fMet) + (6S)-5,6,7,8-tetrahydrofolate + H(+). Attaches a formyl group to the free amino group of methionyl-tRNA(fMet). The formyl group appears to play a dual role in the initiator identity of N-formylmethionyl-tRNA by promoting its recognition by IF2 and preventing the misappropriation of this tRNA by the elongation apparatus. The polypeptide is Methionyl-tRNA formyltransferase (Listeria innocua serovar 6a (strain ATCC BAA-680 / CLIP 11262)).